The primary structure comprises 227 residues: Large ribosomal subunit protein uL3 (227 aa).

Belongs to the universal ribosomal protein uL3 family. In terms of assembly, part of the 50S ribosomal subunit. Forms a cluster with proteins L14 and L19.

Its function is as follows. One of the primary rRNA binding proteins, it binds directly near the 3'-end of the 23S rRNA, where it nucleates assembly of the 50S subunit. The sequence is that of Large ribosomal subunit protein uL3 from Persephonella marina (strain DSM 14350 / EX-H1).